Consider the following 320-residue polypeptide: N-acetylneuraminate lyase (320 aa).

Aceneuramate-binding residues include Thr51 and Thr52. The Proton donor role is filled by Tyr143. Lys173 serves as the catalytic Schiff-base intermediate with substrate. Aceneuramate contacts are provided by Ser175, Gly199, Asp201, Glu202, and Ser218.

It belongs to the DapA family. NanA subfamily. As to quaternary structure, homotetramer.

The protein resides in the cytoplasm. The catalysed reaction is aceneuramate = aldehydo-N-acetyl-D-mannosamine + pyruvate. The protein operates within amino-sugar metabolism; N-acetylneuraminate degradation. In terms of biological role, catalyzes the cleavage of N-acetylneuraminic acid (sialic acid) to form pyruvate and N-acetylmannosamine via a Schiff base intermediate. It prevents sialic acids from being recycled and returning to the cell surface. Involved in the N-glycolylneuraminic acid (Neu5Gc) degradation pathway. The sequence is that of N-acetylneuraminate lyase from Rattus norvegicus (Rat).